The following is a 341-amino-acid chain: Ribonucleoside-diphosphate reductase subunit beta (341 aa).

3 residues coordinate Fe cation: Asp89, Glu120, and His123. Tyr127 is an active-site residue. Fe cation-binding residues include Glu185, Glu219, and His222.

This sequence belongs to the ribonucleoside diphosphate reductase small chain family. In terms of assembly, tetramer of two alpha and two beta subunits. The cofactor is Fe cation.

The enzyme catalyses a 2'-deoxyribonucleoside 5'-diphosphate + [thioredoxin]-disulfide + H2O = a ribonucleoside 5'-diphosphate + [thioredoxin]-dithiol. In terms of biological role, provides the precursors necessary for DNA synthesis. Catalyzes the biosynthesis of deoxyribonucleotides from the corresponding ribonucleotides. This is Ribonucleoside-diphosphate reductase subunit beta (nrdB) from Helicobacter pylori (strain J99 / ATCC 700824) (Campylobacter pylori J99).